A 1363-amino-acid polypeptide reads, in one-letter code: MFLILLISLPTAFAVIGDLKCTTVSINDVDTGVPSISTDTVDVTNGLGTYYVLDRVYLNTTLLLNGYYPTSGSTYRNMALKGTLLLSTLWFKPPFLSDFTNGIFAKVKNTKVIKDGVKYSEFPAITIGSTFVNTSYSVVVQPHTTNLDNKLQGLLEISVCQYTMCEYPNTICNPNLGNQRVELWHWDTGVVSCLYKRNFTYDVNADYLYFHFYQEGGTFYAYFTDTGVVTKFLFNVYLGTVLSHYYVMPLTCNSALTLEYWVTPLTSKQYLLAFNQDGVIFNAVDCKSDFMSEIKCKTLSIAPSTGVYELNGYTVQPIADVYRRIPNLPDCNIEAWLNDKSVPSPLNWERKTFSNCNFNMSSLMSFIQADSFTCNNIDAAKIYGMCFSSITIDKFAIPNGRKVDLQLGNLGYLQSFNYRIDTTATSCQLYYNLPAANVSVSRFNPSTWNRRFGFTEQSVFKPQPAGVFTDHDVVYAQHCFKAPTNFCPCKLDGSLCVGSGSGIDAGYKNTGIGTCPAGTNYLTCHNAAQCGCLCTPDPITSKATGPYKCPQTKYLVGIGEHCSGLAIKSDYCGGNPCSCQPQAFLGWSVDSCLQGDRCNIFANFILHDVNSGTTCSTDLQKSNTDIILGVCVNYDLYGITGQGIFVEVNATYYNSWQNLLYDSNGNLYGFRDYLTNRTFMIRSCYSGRVSAAFHANSSEPALLFRNFKCNYVFNNTLSRQLQPINYFDSYLGCVVNADNSTSSVVQTCDLTVGSGYCVDYSTKRRSRRSITTGYRFTNFEPFTVNSVNDSLEPVGGLYEIQIPSEFTIGNMEEFIQTSSPKVTIDCSAFVCGDYAACKSQLVEYGSFCDNINAILTEVNELLDTTQLQVANSLMNGVTLSTKLKDGVNFNVDDINFSPVLGCLGSDCNKVSSRSAIEDLLFSKVKLSDVGFVEAYNNCTGGAEIRDLICVQSYNGIKVLPPLLSENQISGYTLAATSASLFPPWSAAAGVPFYLNVQYRINGIGVTMDVLSQNQKLIANAFNNALGAIQEGFDATNSALVKIQAVVNANAEALNNLLQQLSNRFGAISSSLQEILSRLDALEAQAQIDRLINGRLTALNAYVSQQLSDSTLVKFSAAQAMEKVNECVKSQSSRINFCGNGNHIISLVQNAPYGLYFIHFSYVPTKYVTAKVSPGLCIAGDRGIAPKSGYFVNVNNTWMFTGSGYYYPEPITGNNVVVMSTCAVNYTKAPDVMLNISTPNLPDFKEELDQWFKNQTSVAPDLSLDYINVTFLDLQDEMNRLQEAIKVLNQSYINLKDIGTYEYYVKWPWYVWLLIGFAGVAMLVLLFFICCCTGCGTSCFKKCGGCCDDYTGHQELVIKTSHDD.

Residues 1–13 (MFLILLISLPTAF) form the signal peptide. Over 14–1307 (AVIGDLKCTT…GTYEYYVKWP (1294 aa)) the chain is Extracellular. The region spanning 15–298 (VIGDLKCTTV…DFMSEIKCKT (284 aa)) is the BetaCoV S1-NTD domain. Intrachain disulfides connect Cys21–Cys165, Cys160–Cys193, Cys172–Cys252, Cys286–Cys296, and Cys331–Cys356. Residues Asn59 and Asn133 are each glycosylated (N-linked (GlcNAc...) asparagine; by host). An N-linked (GlcNAc...) asparagine; by host glycan is attached at Asn198. Positions 329–617 (PDCNIEAWLN…DVNSGTTCST (289 aa)) constitute a BetaCoV S1-CTD domain. N-linked (GlcNAc...) asparagine; by host glycosylation is present at Asn359. Intrachain disulfides connect Cys374-Cys427 and Cys386-Cys615. N-linked (GlcNAc...) asparagine; by host glycans are attached at residues Asn437, Asn649, Asn676, Asn696, Asn714, Asn739, and Asn788. 2 fusion peptide regions span residues 914 to 935 (SAIE…VEAY) and 933 to 953 (EAYN…VQSY). The N-linked (GlcNAc...) asparagine; by host glycan is linked to Asn937. A disulfide bridge links Cys938 with Cys949. The interval 1014–1064 (QKLIANAFNNALGAIQEGFDATNSALVKIQAVVNANAEALNNLLQQLSNRF) is heptad repeat 1. Positions 1043 to 1087 (QAVVNANAEALNNLLQQLSNRFGAISSSLQEILSRLDALEAQAQI) form a coiled coil. N-linked (GlcNAc...) asparagine; by host glycans are attached at residues Asn1194, Asn1224, Asn1234, Asn1253, Asn1267, and Asn1288. The interval 1258-1296 (APDLSLDYINVTFLDLQDEMNRLQEAIKVLNQSYINLKD) is heptad repeat 2. Residues 1269–1297 (TFLDLQDEMNRLQEAIKVLNQSYINLKDI) adopt a coiled-coil conformation. The helical transmembrane segment at 1308 to 1328 (WYVWLLIGFAGVAMLVLLFFI) threads the bilayer. Over 1329 to 1363 (CCCTGCGTSCFKKCGGCCDDYTGHQELVIKTSHDD) the chain is Cytoplasmic. The short motif at 1359–1363 (TSHDD) is the KxHxx element.

The protein belongs to the betacoronaviruses spike protein family. In terms of assembly, homotrimer; each monomer consists of a S1 and a S2 subunit. The resulting peplomers protrude from the virus surface as spikes. Specific enzymatic cleavages in vivo yield mature proteins. The precursor is processed into S1 and S2 by host cell furin or another cellular protease to yield the mature S1 and S2 proteins. Additionally, a second cleavage leads to the release of a fusion peptide after viral attachment to host cell receptor. Post-translationally, the cytoplasmic Cys-rich domain is palmitoylated. Spike glycoprotein is digested within host endosomes.

It is found in the virion membrane. The protein resides in the host endoplasmic reticulum-Golgi intermediate compartment membrane. The protein localises to the host cell membrane. In terms of biological role, attaches the virion to the cell membrane by interacting with host receptor, initiating the infection. Functionally, mediates fusion of the virion and cellular membranes by acting as a class I viral fusion protein. Under the current model, the protein has at least three conformational states: pre-fusion native state, pre-hairpin intermediate state, and post-fusion hairpin state. During viral and target cell membrane fusion, the coiled coil regions (heptad repeats) assume a trimer-of-hairpins structure, positioning the fusion peptide in close proximity to the C-terminal region of the ectodomain. The formation of this structure appears to drive apposition and subsequent fusion of viral and target cell membranes. Its function is as follows. Acts as a viral fusion peptide which is unmasked following S2 cleavage occurring upon virus endocytosis. This chain is Spike glycoprotein, found in Bovine coronavirus (strain LSU-94LSS-051) (BCoV-LSU).